A 712-amino-acid polypeptide reads, in one-letter code: Exocyst complex component EXO70I (712 aa).

Residues 1–18 (MHKKQLMALLMVPQTSDS) form the signal peptide. The stretch at 26 to 53 (LESAYSDLESLLRSSKQMEQNIETMETR) forms a coiled coil. Asparagine 111 carries an N-linked (GlcNAc...) asparagine glycan.

This sequence belongs to the EXO70 family. In terms of assembly, subunit of the exocyst complex that mediates vesicle tethering during exocytosis. Interacts with VPY at the periarbuscular membrane (PAM) around the arbuscule hyphal tips. Present at low levels in non-mycorrhizal root tips.

It is found in the cell membrane. Component of an exocyst subcomplex specifically required for periarbuscular membrane (PAM) biogenesis during arbuscular mycorrhizal (AM) symbiosis with AM fungi (e.g. Glomus versiforme), especially critical during the early branching phase of arbuscule development; probably involved in STR and STR2 delivery into the PAM. The sequence is that of Exocyst complex component EXO70I from Medicago truncatula (Barrel medic).